The sequence spans 349 residues: Thioredoxin-related transmembrane protein 4 (349 aa).

The signal sequence occupies residues 1–23 (MAGGRCGPQLTALLAAWIAAVAA). Positions 30 to 137 (AALPPEQSRV…FEDLQNYILE (108 aa)) constitute a Thioredoxin domain. Residues C64 and C67 each act as nucleophile in the active site. An intrachain disulfide couples C64 to C67. The chain crosses the membrane as a helical span at residues 190-210 (VFFVIATLVFGLFMGLVLVVI). Basic and acidic residues predominate over residues 225–240 (RSEQNRRSEEAHRAEQ). Residues 225 to 349 (RSEQNRRSEE…RKSQHADKGL (125 aa)) are disordered. Acidic residues-rich tracts occupy residues 242–284 (QDAE…EEDN) and 312–321 (VEPEEAEEGI). Phosphoserine occurs at positions 251 and 259. Basic and acidic residues predominate over residues 335-349 (DSLRQRKSQHADKGL).

It localises to the nucleus inner membrane. It is found in the endoplasmic reticulum membrane. The chain is Thioredoxin-related transmembrane protein 4 (TMX4) from Homo sapiens (Human).